The chain runs to 171 residues: ATP synthase subunit b (171 aa).

A helical membrane pass occupies residues 31–51; it reads FFVVLAIFLVVLAVIGTFVVP.

This sequence belongs to the ATPase B chain family. F-type ATPases have 2 components, F(1) - the catalytic core - and F(0) - the membrane proton channel. F(1) has five subunits: alpha(3), beta(3), gamma(1), delta(1), epsilon(1). F(0) has three main subunits: a(1), b(2) and c(10-14). The alpha and beta chains form an alternating ring which encloses part of the gamma chain. F(1) is attached to F(0) by a central stalk formed by the gamma and epsilon chains, while a peripheral stalk is formed by the delta and b chains.

It localises to the cell membrane. In terms of biological role, f(1)F(0) ATP synthase produces ATP from ADP in the presence of a proton or sodium gradient. F-type ATPases consist of two structural domains, F(1) containing the extramembraneous catalytic core and F(0) containing the membrane proton channel, linked together by a central stalk and a peripheral stalk. During catalysis, ATP synthesis in the catalytic domain of F(1) is coupled via a rotary mechanism of the central stalk subunits to proton translocation. Its function is as follows. Component of the F(0) channel, it forms part of the peripheral stalk, linking F(1) to F(0). This Mycobacterium bovis (strain ATCC BAA-935 / AF2122/97) protein is ATP synthase subunit b.